Reading from the N-terminus, the 643-residue chain is tRNA 5-methylaminomethyl-2-thiouridine biosynthesis bifunctional protein MnmC (643 aa).

The tRNA (mnm(5)s(2)U34)-methyltransferase stretch occupies residues 1–223 (MPDRLVSATL…VDDRLVGDYA (223 aa)). Positions 247 to 643 (IGAGLAGCAV…LRARRVGSAG (397 aa)) are FAD-dependent cmnm(5)s(2)U34 oxidoreductase.

It in the N-terminal section; belongs to the methyltransferase superfamily. tRNA (mnm(5)s(2)U34)-methyltransferase family. This sequence in the C-terminal section; belongs to the DAO family. It depends on FAD as a cofactor.

The protein localises to the cytoplasm. It catalyses the reaction 5-aminomethyl-2-thiouridine(34) in tRNA + S-adenosyl-L-methionine = 5-methylaminomethyl-2-thiouridine(34) in tRNA + S-adenosyl-L-homocysteine + H(+). Its function is as follows. Catalyzes the last two steps in the biosynthesis of 5-methylaminomethyl-2-thiouridine (mnm(5)s(2)U) at the wobble position (U34) in tRNA. Catalyzes the FAD-dependent demodification of cmnm(5)s(2)U34 to nm(5)s(2)U34, followed by the transfer of a methyl group from S-adenosyl-L-methionine to nm(5)s(2)U34, to form mnm(5)s(2)U34. The sequence is that of tRNA 5-methylaminomethyl-2-thiouridine biosynthesis bifunctional protein MnmC from Burkholderia orbicola (strain MC0-3).